The chain runs to 489 residues: Oxysterol-binding protein-related protein 1B (489 aa).

The protein belongs to the OSBP family. In terms of tissue distribution, expressed at low levels in flowers.

Functionally, may be involved in the transport of sterols. The protein is Oxysterol-binding protein-related protein 1B (ORP1B) of Arabidopsis thaliana (Mouse-ear cress).